Reading from the N-terminus, the 280-residue chain is Cycloeucalenol cycloisomerase (280 aa).

A run of 6 helical transmembrane segments spans residues 22-42 (LFFL…VVPY), 53-73 (YLLL…LLVG), 89-109 (ANLW…HYFF), 167-187 (FEAA…TIAI), 201-221 (MYRV…PMFF), and 244-264 (AMLV…IVPL).

The protein resides in the membrane. The catalysed reaction is cycloeucalenol = obtusifoliol. Converts pentacyclic cyclopropyl sterols to tetracyclic sterols. This Arabidopsis thaliana (Mouse-ear cress) protein is Cycloeucalenol cycloisomerase (CPI1).